Here is a 1046-residue protein sequence, read N- to C-terminus: UDP-N-acetylglucosamine--peptide N-acetylglucosaminyltransferase 110 kDa subunit (1046 aa).

Ala2 carries the post-translational modification N-acetylalanine. Phosphoserine; by GSK3-beta; alternate is present on residues Ser3 and Ser4. 2 O-linked (GlcNAc) serine; alternate glycosylation sites follow: Ser3 and Ser4. Phosphoserine is present on Ser20. 12 TPR repeats span residues Phe21–Asn54, Ala89–Phe122, Ile123–Leu156, Tyr157–Phe190, Ala191–Phe224, Leu225–His258, Ala259–Phe292, Pro293–His326, Ala327–Phe360, Ala361–Phe394, Ala395–Phe428, and Ala429–Phe462. O-linked (GlcNAc) serine; by autocatalysis glycosylation occurs at Ser399. A Phosphothreonine modification is found at Thr454. One copy of the TPR 13; truncated repeat lies at Pro463–Leu473. The DFP motif motif lies at Asp464 to Tyr466. A Nuclear localization signal motif is present at residues Lys487–Pro503. Residue His508 is the Proton acceptor of the active site. UDP-binding positions include Gln849, Lys852, Ala906 to Lys908, His911 to Arg914, His930 to Thr932, and Asp935. At Tyr989 the chain carries Phosphotyrosine. The interval Lys991–Lys1010 is required for phosphatidylinositol 3,4,5-triphosphate binding.

Belongs to the glycosyltransferase 41 family. O-GlcNAc transferase subfamily. Monomer; may exist in different oligomerization states in cells. Homotrimer, oligomerizes via TPR repeats 6 and 7. Trimerization is not necessary for activity in vitro, however it increases affinity for UDP-GlcNAc. Component of a THAP1/THAP3-HCFC1-OGT complex. Component of the NSL complex at least composed of MOF/KAT8, KANSL1, KANSL2, KANSL3, MCRS1, PHF20, OGT1/OGT, WDR5 and HCFC1. Found in a complex with KIF5B, RHOT1, RHOT2 and TRAK1. Found in a complex composed of at least SINHCAF, SIN3A, HDAC1, SAP30, RBBP4, OGT and TET1. Component of a complex composed of KMT2E/MLL5, OGT and USP7; the complex stabilizes KMT2E/MLL5, preventing KMT2E/MLL5 ubiquitination and proteasomal-mediated degradation. Interacts (via TPRs 1-6) with SIN3A; the interaction mediates transcriptional repression in parallel with histone deacetylase. Interacts (via TPR 5-6) with TET1, TET2 and TET3. Interacts (via TPR repeats 6 and 7) with ATXN10. Interacts with NSD2. Interacts with PROSER1; this interaction mediates TET2 O-GlcNAcylation and stability by promoting the interaction between OGT and TET2. Ubiquitinated by the SCF(FBXO31) complex, leading to its proteasomal degradation. Post-translationally, phosphorylation on Ser-3 or Ser-4 by GSK3-beta positively regulates its activity. Phosphorylation at Thr-454 by AMPK promotes nuclear localization. In terms of processing, glycosylated via autocatalysis; O-GlcNAcylation at Ser-399 promotes nuclear localization.

The protein resides in the nucleus. The protein localises to the cytoplasm. It catalyses the reaction L-seryl-[protein] + UDP-N-acetyl-alpha-D-glucosamine = 3-O-(N-acetyl-beta-D-glucosaminyl)-L-seryl-[protein] + UDP + H(+). The enzyme catalyses L-threonyl-[protein] + UDP-N-acetyl-alpha-D-glucosamine = 3-O-(N-acetyl-beta-D-glucosaminyl)-L-threonyl-[protein] + UDP + H(+). Its pathway is protein modification; protein glycosylation. Its activity is regulated as follows. Subject to product inhibition by UDP. Its function is as follows. Catalyzes the transfer of a single N-acetylglucosamine from UDP-GlcNAc to a serine or threonine residue in cytoplasmic and nuclear proteins resulting in their modification with a beta-linked N-acetylglucosamine (O-GlcNAc). Glycosylates a large and diverse number of proteins including histone H2B, AKT1, AMPK, ATG4B, CAPRIN1, EZH2, FNIP1, GSDMD, KRT7, LMNA, LMNB1, LMNB2, RPTOR, HOXA1, PFKL, KMT2E/MLL5, MAPT/TAU, TET2, RBL2, RET, NOD2 and HCFC1. Can regulate their cellular processes via cross-talk between glycosylation and phosphorylation or by affecting proteolytic processing. Involved in insulin resistance in muscle and adipocyte cells via glycosylating insulin signaling components and inhibiting the 'Thr-308' phosphorylation of AKT1, enhancing IRS1 phosphorylation and attenuating insulin signaling. Involved in glycolysis regulation by mediating glycosylation of 6-phosphofructokinase PFKL, inhibiting its activity. Plays a key role in chromatin structure by mediating O-GlcNAcylation of 'Ser-112' of histone H2B: recruited to CpG-rich transcription start sites of active genes via its interaction with TET proteins (TET1, TET2 or TET3). As part of the NSL complex indirectly involved in acetylation of nucleosomal histone H4 on several lysine residues. O-GlcNAcylation of 'Ser-75' of EZH2 increases its stability, and facilitating the formation of H3K27me3 by the PRC2/EED-EZH2 complex. Stabilizes KMT2E/MLL5 by mediating its glycosylation, thereby preventing KMT2E/MLL5 ubiquitination. Regulates circadian oscillation of the clock genes and glucose homeostasis in the liver. Stabilizes clock proteins BMAL1 and CLOCK through O-glycosylation, which prevents their ubiquitination and subsequent degradation. Promotes the CLOCK-BMAL1-mediated transcription of genes in the negative loop of the circadian clock such as PER1/2 and CRY1/2. O-glycosylates HCFC1 and regulates its proteolytic processing and transcriptional activity. Component of a THAP1/THAP3-HCFC1-OGT complex that is required for the regulation of the transcriptional activity of RRM1. Regulates mitochondrial motility in neurons by mediating glycosylation of TRAK1. Promotes autophagy by mediating O-glycosylation of ATG4B. Acts as a regulator of mTORC1 signaling by mediating O-glycosylation of RPTOR and FNIP1: O-GlcNAcylation of RPTOR in response to glucose sufficiency promotes activation of the mTORC1 complex. The protein is UDP-N-acetylglucosamine--peptide N-acetylglucosaminyltransferase 110 kDa subunit (OGT) of Sus scrofa (Pig).